A 146-amino-acid chain; its full sequence is Hemoglobin subunit beta (146 aa).

At V1 the chain carries N-acetylvaline. The Globin domain maps to 2–146 (HLTADEKAAV…VANALAHKYH (145 aa)). At T12 the chain carries Phosphothreonine. The residue at position 44 (S44) is a Phosphoserine. K59 carries the post-translational modification N6-acetyllysine. H63 contributes to the heme b binding site. Residue K82 is modified to N6-acetyllysine. H92 is a heme b binding site. The residue at position 93 (C93) is an S-nitrosocysteine. An N6-acetyllysine modification is found at K144.

The protein belongs to the globin family. Heterotetramer of two alpha chains and two beta chains. As to expression, red blood cells.

Functionally, involved in oxygen transport from the lung to the various peripheral tissues. The sequence is that of Hemoglobin subunit beta (HBB) from Odobenus rosmarus divergens (Pacific walrus).